A 401-amino-acid polypeptide reads, in one-letter code: Splicing factor 45 (401 aa).

The residue at position 2 (serine 2) is an N-acetylserine. The residue at position 2 (serine 2) is a Phosphoserine. A Glycyl lysine isopeptide (Lys-Gly) (interchain with G-Cter in SUMO2) cross-link involves residue lysine 15. At lysine 21 the chain carries N6-acetyllysine. Glycyl lysine isopeptide (Lys-Gly) (interchain with G-Cter in SUMO2) cross-links involve residues lysine 24 and lysine 33. Position 41 is an N6-acetyllysine; alternate (lysine 41). A Glycyl lysine isopeptide (Lys-Gly) (interchain with G-Cter in SUMO2); alternate cross-link involves residue lysine 41. Over residues 57 to 68 the composition is skewed to basic and acidic residues; the sequence is LKRGGSSDDRQI. 2 disordered regions span residues 57-84 and 114-233; these read LKRGGSSDDRQIVDTPPHVAAGLKDPVP and RQRE…FLAN. Residue lysine 58 forms a Glycyl lysine isopeptide (Lys-Gly) (interchain with G-Cter in SUMO2) linkage. Threonine 71 is subject to Phosphothreonine. Positions 114–153 are enriched in basic and acidic residues; that stretch reads RQREERQRQRELERQKEIEEREKRRKDRHEASGFARRPDP. A phosphoserine mark is found at serine 155 and serine 169. A compositionally biased stretch (basic and acidic residues) spans 182 to 200; sequence VEKDKELPRDFPYEEDSRP. Phosphoserine is present on serine 222. Positions 235–283 constitute a G-patch domain; it reads GGTVAHKIMQKYGFREGQGLGKHEQGLSTALSVEKTSKRGGKIIVGDAT. A Phosphothreonine modification is found at threonine 237. Lysine 256 is covalently cross-linked (Glycyl lysine isopeptide (Lys-Gly) (interchain with G-Cter in SUMO2)). Serine 266 carries the post-translational modification Phosphoserine. Lysine 276 participates in a covalent cross-link: Glycyl lysine isopeptide (Lys-Gly) (interchain with G-Cter in SUMO2). Phosphoserine is present on residues serine 291 and serine 293. The RRM domain maps to 306–385; that stretch reads VVLLRNMVGA…YFGGRVVKAC (80 aa).

As to quaternary structure, binds SXL. Associates with the spliceosome. Interacts with SF3B1, SF1 and U2AF2.

The protein localises to the nucleus. Its function is as follows. Splice factor that binds to the single-stranded 3'AG at the exon/intron border and promotes its utilization in the second catalytic step. Involved in the regulation of alternative splicing and the utilization of cryptic splice sites. Promotes the utilization of a cryptic splice site created by the beta-110 mutation in the HBB gene. The resulting frameshift leads to sickle cell anemia. The sequence is that of Splicing factor 45 (RBM17) from Homo sapiens (Human).